We begin with the raw amino-acid sequence, 380 residues long: Histidinol-phosphate aminotransferase (380 aa).

Position 235 is an N6-(pyridoxal phosphate)lysine (Lys-235).

Belongs to the class-II pyridoxal-phosphate-dependent aminotransferase family. Histidinol-phosphate aminotransferase subfamily. In terms of assembly, homodimer. Requires pyridoxal 5'-phosphate as cofactor.

It carries out the reaction L-histidinol phosphate + 2-oxoglutarate = 3-(imidazol-4-yl)-2-oxopropyl phosphate + L-glutamate. Its pathway is amino-acid biosynthesis; L-histidine biosynthesis; L-histidine from 5-phospho-alpha-D-ribose 1-diphosphate: step 7/9. This chain is Histidinol-phosphate aminotransferase, found in Rhodococcus opacus (strain B4).